Here is an 88-residue protein sequence, read N- to C-terminus: Large ribosomal subunit protein eL34 (88 aa).

Belongs to the eukaryotic ribosomal protein eL34 family.

This chain is Large ribosomal subunit protein eL34, found in Saccharolobus solfataricus (strain ATCC 35092 / DSM 1617 / JCM 11322 / P2) (Sulfolobus solfataricus).